The following is a 367-amino-acid chain: 2-aminoethylphosphonate--pyruvate transaminase (367 aa).

Position 194 is an N6-(pyridoxal phosphate)lysine (K194).

It belongs to the class-V pyridoxal-phosphate-dependent aminotransferase family. PhnW subfamily. As to quaternary structure, homodimer. Requires pyridoxal 5'-phosphate as cofactor.

The catalysed reaction is (2-aminoethyl)phosphonate + pyruvate = phosphonoacetaldehyde + L-alanine. Involved in phosphonate degradation. The protein is 2-aminoethylphosphonate--pyruvate transaminase of Salmonella paratyphi A (strain ATCC 9150 / SARB42).